The primary structure comprises 662 residues: Primary amine oxidase 2 (662 aa).

Positions 1 to 22 are cleaved as a signal peptide; that stretch reads MSQLLLFTILVFSSVFVIGSLS. Asn154 carries an N-linked (GlcNAc...) asparagine glycan. 321-332 lines the substrate pocket; it reads FFDCGEFGCGQY. The active-site Proton acceptor is the Asp323. Cys342 and Cys368 are oxidised to a cystine. Residue 405 to 410 participates in substrate binding; sequence VGNYDY. Catalysis depends on Tyr408, which acts as the Schiff-base intermediate with substrate; via topaquinone. The residue at position 408 (Tyr408) is a 2',4',5'-topaquinone. 2 residues coordinate Cu cation: His464 and His466. Mn(2+)-binding residues include Asp473 and Asp475. Asn568 is a glycosylation site (N-linked (GlcNAc...) asparagine). Asp602 and Ile603 together coordinate Mn(2+). His613 provides a ligand contact to Cu cation.

This sequence belongs to the copper/topaquinone oxidase family. In terms of assembly, homodimer. The cofactor is Cu cation. It depends on Mn(2+) as a cofactor. L-topaquinone is required as a cofactor. Post-translationally, topaquinone (TPQ) is generated by copper-dependent autoxidation of a specific tyrosyl residue.

The catalysed reaction is a primary methyl amine + O2 + H2O = an aldehyde + H2O2 + NH4(+). This Arabidopsis thaliana (Mouse-ear cress) protein is Primary amine oxidase 2.